The following is a 957-amino-acid chain: Glycine dehydrogenase (decarboxylating) (957 aa).

N6-(pyridoxal phosphate)lysine is present on Lys-708.

The protein belongs to the GcvP family. In terms of assembly, the glycine cleavage system is composed of four proteins: P, T, L and H. It depends on pyridoxal 5'-phosphate as a cofactor.

It carries out the reaction N(6)-[(R)-lipoyl]-L-lysyl-[glycine-cleavage complex H protein] + glycine + H(+) = N(6)-[(R)-S(8)-aminomethyldihydrolipoyl]-L-lysyl-[glycine-cleavage complex H protein] + CO2. Functionally, the glycine cleavage system catalyzes the degradation of glycine. The P protein binds the alpha-amino group of glycine through its pyridoxal phosphate cofactor; CO(2) is released and the remaining methylamine moiety is then transferred to the lipoamide cofactor of the H protein. The protein is Glycine dehydrogenase (decarboxylating) of Salmonella typhi.